We begin with the raw amino-acid sequence, 561 residues long: PR domain zinc finger protein 14 (561 aa).

Residues 1 to 20 form a disordered region; that stretch reads MALPPSGETQSQDKANYLPQ. Polar residues predominate over residues 7-20; that stretch reads GETQSQDKANYLPQ. The interval 184–373 is interaction with CBFA2T2; that stretch reads GFNFTEEELS…GVPMNLRVTE (190 aa). In terms of domain architecture, SET spans 241–356; that stretch reads EGLCLMQTSF…RNQELLVWYG (116 aa). Y355 is an S-adenosyl-L-methionine binding site. The segment at 390–416 adopts a C2H2-type 1; atypical zinc-finger fold; the sequence is YRCERCGKVFTYKYYRDKHLKYTPCVD. C2H2-type zinc fingers lie at residues 422-445, 451-473, 479-501, 507-530, and 536-558; these read FPCS…LHVH, YLCS…MRVH, YQCV…IRQH, FKCK…RRSH, and SSCD…MRLH.

This sequence belongs to the class V-like SAM-binding methyltransferase superfamily. Interacts with CBFA2T2. In terms of tissue distribution, restricted to embryonic stem cells and primordial germ cells. Not detected in epiblast-derived stem cells.

It localises to the nucleus. In terms of biological role, transcription factor that has both positive and negative roles on transcription. Plays a role in cellular pluripotency. Essential for germ cell development at 2 levels: the reacquisition of potential pluripotency, including SOX2 up-regulation, and successful epigenetic reprogramming, characterized by EHMT1 repression. Its association with CBFA2T2 is required for the functions in pluripotency and germ cell formation. The polypeptide is PR domain zinc finger protein 14 (Prdm14) (Mus musculus (Mouse)).